The chain runs to 627 residues: tRNA uridine 5-carboxymethylaminomethyl modification enzyme MnmG (627 aa).

Residues 13 to 18 (GGGHAG), Val125, and Ser180 each bind FAD. 274-288 (GPRYCPSIEDKVVRF) lines the NAD(+) pocket. An FAD-binding site is contributed by Gln371.

It belongs to the MnmG family. As to quaternary structure, homodimer. Heterotetramer of two MnmE and two MnmG subunits. It depends on FAD as a cofactor.

The protein localises to the cytoplasm. Functionally, NAD-binding protein involved in the addition of a carboxymethylaminomethyl (cmnm) group at the wobble position (U34) of certain tRNAs, forming tRNA-cmnm(5)s(2)U34. The sequence is that of tRNA uridine 5-carboxymethylaminomethyl modification enzyme MnmG from Francisella tularensis subsp. tularensis (strain FSC 198).